The sequence spans 406 residues: Tryptophan synthase beta chain (406 aa).

The residue at position 99 (lysine 99) is an N6-(pyridoxal phosphate)lysine.

This sequence belongs to the TrpB family. Tetramer of two alpha and two beta chains. Pyridoxal 5'-phosphate is required as a cofactor.

The enzyme catalyses (1S,2R)-1-C-(indol-3-yl)glycerol 3-phosphate + L-serine = D-glyceraldehyde 3-phosphate + L-tryptophan + H2O. Its pathway is amino-acid biosynthesis; L-tryptophan biosynthesis; L-tryptophan from chorismate: step 5/5. Functionally, the beta subunit is responsible for the synthesis of L-tryptophan from indole and L-serine. The sequence is that of Tryptophan synthase beta chain from Allorhizobium ampelinum (strain ATCC BAA-846 / DSM 112012 / S4) (Agrobacterium vitis (strain S4)).